Reading from the N-terminus, the 47-residue chain is Photosystem II reaction center protein K (47 aa).

A propeptide spanning residues 1-10 (MASFTLDLLA) is cleaved from the precursor. A helical membrane pass occupies residues 19-39 (FSPLIDILPLIPVFFLLLAFV).

Belongs to the PsbK family. In terms of assembly, PSII is composed of 1 copy each of membrane proteins PsbA, PsbB, PsbC, PsbD, PsbE, PsbF, PsbH, PsbI, PsbJ, PsbK, PsbL, PsbM, PsbT, PsbX, PsbY, PsbZ, Psb30/Ycf12, peripheral proteins PsbO, CyanoQ (PsbQ), PsbU, PsbV and a large number of cofactors. It forms dimeric complexes.

The protein resides in the cellular thylakoid membrane. Its function is as follows. One of the components of the core complex of photosystem II (PSII). PSII is a light-driven water:plastoquinone oxidoreductase that uses light energy to abstract electrons from H(2)O, generating O(2) and a proton gradient subsequently used for ATP formation. It consists of a core antenna complex that captures photons, and an electron transfer chain that converts photonic excitation into a charge separation. This is Photosystem II reaction center protein K from Parasynechococcus marenigrum (strain WH8102).